The following is a 198-amino-acid chain: Pyridoxal 5'-phosphate synthase subunit PdxT (198 aa).

49–51 (GES) serves as a coordination point for L-glutamine. The active-site Nucleophile is cysteine 81. L-glutamine contacts are provided by residues arginine 113 and 141–142 (IR). Active-site charge relay system residues include histidine 177 and glutamate 179.

Belongs to the glutaminase PdxT/SNO family. In terms of assembly, in the presence of PdxS, forms a dodecamer of heterodimers. Only shows activity in the heterodimer.

It carries out the reaction aldehydo-D-ribose 5-phosphate + D-glyceraldehyde 3-phosphate + L-glutamine = pyridoxal 5'-phosphate + L-glutamate + phosphate + 3 H2O + H(+). The enzyme catalyses L-glutamine + H2O = L-glutamate + NH4(+). Its pathway is cofactor biosynthesis; pyridoxal 5'-phosphate biosynthesis. In terms of biological role, catalyzes the hydrolysis of glutamine to glutamate and ammonia as part of the biosynthesis of pyridoxal 5'-phosphate. The resulting ammonia molecule is channeled to the active site of PdxS. This chain is Pyridoxal 5'-phosphate synthase subunit PdxT, found in Mycobacterium tuberculosis (strain ATCC 25177 / H37Ra).